A 247-amino-acid chain; its full sequence is Caffeoyl-CoA O-methyltransferase (247 aa).

Residue Lys21 coordinates substrate. Residues Thr63, Glu85, 87-88 (GV), Ser93, Asp111, and Ala140 each bind S-adenosyl-L-methionine. A substrate-binding site is contributed by Asp163. Asp163 is a binding site for a divalent metal cation. An S-adenosyl-L-methionine-binding site is contributed by Asp165. Asp189 and Asn190 together coordinate a divalent metal cation. Asn194 provides a ligand contact to substrate.

It belongs to the class I-like SAM-binding methyltransferase superfamily. Cation-dependent O-methyltransferase family. CCoAMT subfamily. As to quaternary structure, homodimer. Ca(2+) serves as cofactor. Requires Mg(2+) as cofactor. It depends on Zn(2+) as a cofactor.

It catalyses the reaction (E)-caffeoyl-CoA + S-adenosyl-L-methionine = (E)-feruloyl-CoA + S-adenosyl-L-homocysteine + H(+). It participates in aromatic compound metabolism; phenylpropanoid biosynthesis. Functionally, methylates caffeoyl-CoA to feruloyl-CoA and 5-hydroxyferuloyl-CoA to sinapoyl-CoA. Plays a role in the synthesis of feruloylated polysaccharides. Involved in the reinforcement of the plant cell wall. Also involved in the responding to wounding or pathogen challenge by the increased formation of cell wall-bound ferulic acid polymers. The polypeptide is Caffeoyl-CoA O-methyltransferase (CCOMT) (Medicago sativa (Alfalfa)).